The chain runs to 298 residues: UTP--glucose-1-phosphate uridylyltransferase (298 aa).

The protein belongs to the UDPGP type 2 family.

It catalyses the reaction alpha-D-glucose 1-phosphate + UTP + H(+) = UDP-alpha-D-glucose + diphosphate. It functions in the pathway carbohydrate metabolism; nucleotide-sugar metabolism. Its pathway is capsule biogenesis; capsule polysaccharide biosynthesis. The polypeptide is UTP--glucose-1-phosphate uridylyltransferase (galF) (Klebsiella pneumoniae).